Consider the following 110-residue polypeptide: Phosphoribosyl-ATP pyrophosphatase (110 aa).

Belongs to the PRA-PH family.

The protein resides in the cytoplasm. It carries out the reaction 1-(5-phospho-beta-D-ribosyl)-ATP + H2O = 1-(5-phospho-beta-D-ribosyl)-5'-AMP + diphosphate + H(+). It functions in the pathway amino-acid biosynthesis; L-histidine biosynthesis; L-histidine from 5-phospho-alpha-D-ribose 1-diphosphate: step 2/9. The chain is Phosphoribosyl-ATP pyrophosphatase from Teredinibacter turnerae (strain ATCC 39867 / T7901).